The sequence spans 128 residues: Large ribosomal subunit protein bL12 (128 aa).

Homodimer. Part of the 50S ribosomal subunit; present in 6 copies per ribosome. Forms part of the ribosomal stalk which helps the ribosome interact with GTP-bound translation factors. Forms a heptameric L10(L12)2(L12)2(L12)2 complex, where L10 forms an elongated spine to which 3 L12 dimers bind in a sequential fashion.

Functionally, forms part of the ribosomal stalk which helps the ribosome interact with GTP-bound translation factors. Is thus essential for accurate translation. This is Large ribosomal subunit protein bL12 from Thermotoga maritima (strain ATCC 43589 / DSM 3109 / JCM 10099 / NBRC 100826 / MSB8).